Consider the following 307-residue polypeptide: Regulating synaptic membrane exocytosis protein 3 (307 aa).

The interval 86–120 (STETGIAVEMRSRVTRQGSRESTDGSTNSNSSEGT) is disordered. Polar residues predominate over residues 109–119 (DGSTNSNSSEG). One can recognise a C2 domain in the interval 155 to 273 (PMGDVHIAIM…DLSAVVTGWY (119 aa)). Residues Ser294 and Ser297 each carry the phosphoserine modification.

In terms of assembly, binds PPFIA3. Does not bind RAB3. In terms of tissue distribution, expressed exclusively in brain with significant levels in cortex, cerebellum and olfactory bulb. Detected at lower level in hippocampus.

The protein resides in the synapse. In terms of biological role, regulates synaptic membrane exocytosis. This Rattus norvegicus (Rat) protein is Regulating synaptic membrane exocytosis protein 3 (Rims3).